We begin with the raw amino-acid sequence, 154 residues long: Bacterial ferritin (154 aa).

The region spanning 1–145 is the Ferritin-like diiron domain; sequence MQGNQAVVDY…QQLRLIELIG (145 aa). Fe cation contacts are provided by glutamate 18, glutamate 51, histidine 54, glutamate 93, glutamate 127, and histidine 130.

Belongs to the bacterioferritin family. Heterooligomer of 24 subunits, arranged as 12 dimers, that are packed together to form an approximately spherical molecule with a central cavity, in which large amounts of iron can be deposited.

The enzyme catalyses 4 Fe(2+) + O2 + 4 H(+) = 4 Fe(3+) + 2 H2O. It carries out the reaction Fe(2+)(in) = Fe(2+)(out). Functionally, iron-storage protein, whose ferroxidase center binds Fe(2+), oxidizes it using dioxygen to Fe(3+), and participates in the subsequent Fe(3+) oxide mineral core formation within the central cavity of the BFR protein shell. This chain is Bacterial ferritin (bfrA), found in Neisseria meningitidis serogroup A / serotype 4A (strain DSM 15465 / Z2491).